The primary structure comprises 520 residues: D-aminopeptidase (520 aa).

S62 functions as the Nucleophile in the catalytic mechanism. K65 serves as the catalytic Proton donor/acceptor. Positions 477 to 487 are important for specificity; it reads QRSMDAPSPGE. D481 is a binding site for substrate.

Belongs to the peptidase S12 family. Homodimer.

It catalyses the reaction Release of an N-terminal D-amino acid from a peptide, Xaa-|-Yaa-, in which Xaa is preferably D-Ala, D-Ser or D-Thr. D-amino acid amides and methyl esters also are hydrolyzed, as is glycine amide.. Inhibited by beta-lactam compounds such as 6-aminopenicillic acid, 7-aminocephalosporanic acid, benzylpenicillin and ampicillin. Inhibited by p-chloromercuribenzoate. In terms of biological role, hydrolyzes N-terminal residues in D-amino acid-containing peptides. The sequence is that of D-aminopeptidase from Brucella anthropi (strain ATCC 49188 / DSM 6882 / CCUG 24695 / JCM 21032 / LMG 3331 / NBRC 15819 / NCTC 12168 / Alc 37) (Ochrobactrum anthropi).